Reading from the N-terminus, the 1393-residue chain is DNA-directed RNA polymerase subunit beta' (1393 aa).

Zn(2+) is bound by residues C72, C74, C87, and C90. Mg(2+) is bound by residues D463, D465, and D467. Residues C812, C887, C894, and C897 each contribute to the Zn(2+) site.

This sequence belongs to the RNA polymerase beta' chain family. As to quaternary structure, the RNAP catalytic core consists of 2 alpha, 1 beta, 1 beta' and 1 omega subunit. When a sigma factor is associated with the core the holoenzyme is formed, which can initiate transcription. Requires Mg(2+) as cofactor. Zn(2+) serves as cofactor.

It carries out the reaction RNA(n) + a ribonucleoside 5'-triphosphate = RNA(n+1) + diphosphate. Its function is as follows. DNA-dependent RNA polymerase catalyzes the transcription of DNA into RNA using the four ribonucleoside triphosphates as substrates. This Chlamydia abortus (strain DSM 27085 / S26/3) (Chlamydophila abortus) protein is DNA-directed RNA polymerase subunit beta'.